The primary structure comprises 322 residues: Ribosomal RNA small subunit methyltransferase H (322 aa).

S-adenosyl-L-methionine-binding positions include 42-44 (GGH), Asp62, Phe86, Asp107, and Gln114.

The protein belongs to the methyltransferase superfamily. RsmH family.

It is found in the cytoplasm. The catalysed reaction is cytidine(1402) in 16S rRNA + S-adenosyl-L-methionine = N(4)-methylcytidine(1402) in 16S rRNA + S-adenosyl-L-homocysteine + H(+). In terms of biological role, specifically methylates the N4 position of cytidine in position 1402 (C1402) of 16S rRNA. In Janthinobacterium sp. (strain Marseille) (Minibacterium massiliensis), this protein is Ribosomal RNA small subunit methyltransferase H.